We begin with the raw amino-acid sequence, 290 residues long: Plasma membrane ascorbate-dependent reductase CYBRD1 (290 aa).

The Cytoplasmic segment spans residues 1–7 (MAMEGYR). Residues 8-32 (GFLGLLVSALLVGFLSVIFVLIWVL) traverse the membrane as a helical segment. The Cytochrome b561 domain maps to 15–220 (SALLVGFLSV…FGALIFWIVT (206 aa)). The Extracellular portion of the chain corresponds to 33–47 (HFREGLGWNGSGLEF). The chain crosses the membrane as a helical span at residues 48–69 (NWHPVLAVTGFVFIQGIAIIVY). Residues H50, R70, and K79 each coordinate heme b. Over 70–78 (RLPWTWKCS) the chain is Cytoplasmic. The L-ascorbate site is built by K79 and K83. The helical transmembrane segment at 79–105 (KLLMKSIHAGLNAVAAILAIISVVAVF) threads the bilayer. Heme b is bound at residue H86. Residues 106-118 (EYHNVQKVPHMYS) lie on the Extracellular side of the membrane. H108 contacts Fe(3+). Heme b is bound by residues 115–118 (HMYS) and H120. A helical membrane pass occupies residues 119-144 (LHSWVGLTALILYIQQLVVGFFVFLL). Over 145–151 (PWAPPSL) the chain is Cytoplasmic. Position 152 (R152) interacts with L-ascorbate. A helical transmembrane segment spans residues 152–179 (RAIVMPIHVYSGLLLFGTVIATVLMGVT). Positions 159 and 180 each coordinate heme b. At 180 to 197 (EKLFFVLKHPSYHSFPPE) the chain is on the extracellular side. Residues 198–222 (GVFTNTLGLLILVFGALIFWIVTRP) form a helical membrane-spanning segment. Residues 223-290 (QWKRPREPGS…LADSGQRSTM (68 aa)) are Cytoplasmic-facing. K225 provides a ligand contact to heme b. At S232 the chain carries Phosphoserine. Residues 257–290 (SMDAADPADAESSSEGAARKRTLGLADSGQRSTM) form a disordered region. A compositionally biased stretch (low complexity) spans 260–272 (AADPADAESSSEG). Residue T289 is modified to Phosphothreonine.

As to quaternary structure, homodimer. It depends on heme b as a cofactor. Highly expressed in the brush-border membrane of duodenal enterocytes (at protein level). Also expressed in liver and spleen.

It localises to the cell membrane. The protein localises to the apical cell membrane. It catalyses the reaction Fe(3+)(out) + L-ascorbate(in) = monodehydro-L-ascorbate radical(in) + Fe(2+)(out) + H(+). The enzyme catalyses Cu(2+)(out) + L-ascorbate(in) = Cu(+)(out) + monodehydro-L-ascorbate radical(in) + H(+). The catalysed reaction is monodehydro-L-ascorbate radical(out) + L-ascorbate(in) = monodehydro-L-ascorbate radical(in) + L-ascorbate(out). In terms of biological role, plasma membrane reductase that uses cytoplasmic ascorbate as an electron donor to reduce extracellular Fe(3+) into Fe(2+). Probably functions in dietary iron absorption at the brush border of duodenal enterocytes by producing Fe(2+), the divalent form of iron that can be transported into enterocytes. It is also able to reduce extracellular monodehydro-L-ascorbate and may be involved in extracellular ascorbate regeneration by erythrocytes in blood. May also act as a ferrireductase in airway epithelial cells. May also function as a cupric transmembrane reductase. The polypeptide is Plasma membrane ascorbate-dependent reductase CYBRD1 (Mus musculus (Mouse)).